The sequence spans 188 residues: Probable thymidylate kinase (188 aa).

11–18 (GIDGSGKT) is a binding site for ATP.

This sequence belongs to the thymidylate kinase family.

The catalysed reaction is dTMP + ATP = dTDP + ADP. The protein is Probable thymidylate kinase (tmk) of Methanocaldococcus jannaschii (strain ATCC 43067 / DSM 2661 / JAL-1 / JCM 10045 / NBRC 100440) (Methanococcus jannaschii).